Consider the following 355-residue polypeptide: uncharacterized protein (355 aa).

It belongs to the 3-beta-HSD family.

This is an uncharacterized protein from Frog virus 3 (isolate Goorha) (FV-3).